The primary structure comprises 417 residues: Phosphoglycerate kinase (417 aa).

Positions 23, 24, 25, 26, 39, 40, 63, 64, 66, 67, 122, 123, 170, and 171 each coordinate (2R)-3-phosphoglycerate. Glycine 214 lines the ADP pocket. Glycine 214 is a binding site for CDP. 2 residues coordinate AMP: alanine 215 and lysine 216. Alanine 215 contacts ATP. Alanine 215 contacts Mg(2+). Aspartate 219 lines the CDP pocket. Aspartate 219 contacts Mg(2+). Lysine 220 contributes to the AMP binding site. Lysine 220 is a binding site for ATP. Glycine 238 lines the ADP pocket. Glycine 238 serves as a coordination point for CDP. Residues alanine 239 and glycine 313 each coordinate AMP. Alanine 239 and glycine 313 together coordinate ATP. 2 residues coordinate CDP: glycine 338 and phenylalanine 343. Residue phenylalanine 343 participates in ADP binding. Glutamate 344 contributes to the AMP binding site. Residues glutamate 344, aspartate 375, and threonine 376 each coordinate ATP. Aspartate 375 is a binding site for Mg(2+).

Belongs to the phosphoglycerate kinase family. As to quaternary structure, monomer. The cofactor is Mg(2+).

The protein localises to the cytoplasm. Its subcellular location is the mitochondrion. It catalyses the reaction (2R)-3-phosphoglycerate + ATP = (2R)-3-phospho-glyceroyl phosphate + ADP. Its pathway is carbohydrate degradation; glycolysis; pyruvate from D-glyceraldehyde 3-phosphate: step 2/5. In terms of biological role, catalyzes one of the two ATP producing reactions in the glycolytic pathway via the reversible conversion of 1,3-diphosphoglycerate to 3-phosphoglycerate. Both L- and D- forms of purine and pyrimidine nucleotides can be used as substrates, but the activity is much lower on pyrimidines. Negatively regulates the biosynthesis of acetyl-CoA from pyruvate in the mitochondrion. The polypeptide is Phosphoglycerate kinase (pgkA) (Aspergillus oryzae (strain ATCC 42149 / RIB 40) (Yellow koji mold)).